The primary structure comprises 77 residues: VpAmp2.0 (77 aa).

The first 23 residues, 1-23 (MQLRKALLVIFVAYLLVTDEAEA), serve as a signal peptide directing secretion. A propeptide spanning residues 49-77 (RKREIEDLFDPYQKDLDLQRLDRFFSQFQ) is cleaved from the precursor.

The protein belongs to the non-disulfide-bridged peptide (NDBP) superfamily. Medium-length antimicrobial peptide (group 3) family. In terms of tissue distribution, expressed by the venom gland.

The protein resides in the secreted. Its subcellular location is the target cell membrane. Functionally, antimicrobial peptide with potent activity against Gram-positive bacteria S.aureus (MIC=10 uM) and S.agalactiaea (MIC=15 uM), and Gram-negative bacteria E.coli (MIC=24 uM) and P.aeruginosa (MIC=15 uM), as well as against yeasts Candida albicans (MIC=3.1 uM) and C.glabrata (MIC=25 uM). Also elicits low hemolysis on human erythrocytes (HC(50)=167 uM). This Mesomexovis punctatus (Scorpion) protein is VpAmp2.0.